The primary structure comprises 119 residues: Large ribosomal subunit protein uL22c (119 aa).

The protein belongs to the universal ribosomal protein uL22 family. In terms of assembly, part of the 50S ribosomal subunit.

Its subcellular location is the plastid. It localises to the chloroplast. In terms of biological role, this protein binds specifically to 23S rRNA. Functionally, the globular domain of the protein is located near the polypeptide exit tunnel on the outside of the subunit, while an extended beta-hairpin is found that lines the wall of the exit tunnel in the center of the 70S ribosome. The protein is Large ribosomal subunit protein uL22c (rpl22) of Spirogyra maxima (Green alga).